A 301-amino-acid chain; its full sequence is Sulfate adenylyltransferase subunit 2 (301 aa).

The protein belongs to the PAPS reductase family. CysD subfamily. In terms of assembly, heterodimer composed of CysD, the smaller subunit, and CysN.

It catalyses the reaction sulfate + ATP + H(+) = adenosine 5'-phosphosulfate + diphosphate. It functions in the pathway sulfur metabolism; hydrogen sulfide biosynthesis; sulfite from sulfate: step 1/3. Its function is as follows. With CysN forms the ATP sulfurylase (ATPS) that catalyzes the adenylation of sulfate producing adenosine 5'-phosphosulfate (APS) and diphosphate, the first enzymatic step in sulfur assimilation pathway. APS synthesis involves the formation of a high-energy phosphoric-sulfuric acid anhydride bond driven by GTP hydrolysis by CysN coupled to ATP hydrolysis by CysD. The protein is Sulfate adenylyltransferase subunit 2 of Shewanella loihica (strain ATCC BAA-1088 / PV-4).